The following is a 301-amino-acid chain: Nucleotide-binding protein Rfer_1653 (301 aa).

An ATP-binding site is contributed by 15 to 22 (GMSGSGKS). 64-67 (DVRT) provides a ligand contact to GTP.

Belongs to the RapZ-like family.

Its function is as follows. Displays ATPase and GTPase activities. In Albidiferax ferrireducens (strain ATCC BAA-621 / DSM 15236 / T118) (Rhodoferax ferrireducens), this protein is Nucleotide-binding protein Rfer_1653.